The following is a 194-amino-acid chain: Anaphase-promoting complex subunit CDC26 (194 aa).

The tract at residues 47-194 (EPMDQSEPPR…PSSNTRSHRH (148 aa)) is disordered. Polar residues-rich tracts occupy residues 79–94 (GECT…TSAR) and 102–112 (LTLSTPVNPVS). 2 stretches are compositionally biased toward low complexity: residues 154–166 (DESP…PESP) and 174–194 (TPGN…SHRH).

Belongs to the CDC26 family. The APC/C complex is probably composed of at least 12 subunits: apc-2, apc-10, apc-11, cdc-26, emb-1, emb-27, emb-30, mat-1, mat-2, mat-3, such-1 and gfi-3.

It is found in the nucleus. The protein operates within protein modification; protein ubiquitination. Its function is as follows. Probable component of the anaphase promoting complex/cyclosome (APC/C), a cell cycle-regulated E3 ubiquitin ligase that controls progression through mitosis and the G1 phase of the cell cycle. The APC/C complex acts by mediating ubiquitination and subsequent degradation of target proteins. Developmental role in early embryogenesis and the metaphase to anaphase transition in meiosis and mitosis. Required for embryonic anterior-posterior axis formation. The polypeptide is Anaphase-promoting complex subunit CDC26 (Caenorhabditis elegans).